The sequence spans 416 residues: MLKRDMNIADYDAELFAAIQEETLRQEEHIELIASENYTSPRVMEAQGSQLTNKYAEGYPGKRYYGGCEYVDKAEALAIDRACQLFGCEYANVQPHSGSQANSAVYMALLNPGDTVLGMSLAHGGHLTHGSPVNFSGKHYNVIPYGIDEAGQINYDEMETLALEHKPKMIIGGFSAYSQIVDWKRMREIADKVDAYLFVDMAHVAGLIAAGEYPTPVPHAHVVTTTTHKTLAGPRGGLILSNAGEDMYKKLNSAVFPGGQGGPLMHVIAGKAVAFKEAMEPEFKAYQARVVKNAKAMVAQFQERGYKIVSNGTENHLFLVDLIDKDITGKDADAALGAANITVNKNSVPNDPRSPFVTSGIRVGTPAITRRGFTEADAKELANWMCDVLDNIGNEAVIEATKQKVLEICKRLPVYA.

Residues leucine 121 and glycine 125–leucine 127 contribute to the (6S)-5,6,7,8-tetrahydrofolate site. An N6-(pyridoxal phosphate)lysine modification is found at lysine 229. Residues glutamate 245 and serine 354–phenylalanine 356 contribute to the (6S)-5,6,7,8-tetrahydrofolate site.

Belongs to the SHMT family. As to quaternary structure, homodimer. Pyridoxal 5'-phosphate is required as a cofactor.

The protein localises to the cytoplasm. It carries out the reaction (6R)-5,10-methylene-5,6,7,8-tetrahydrofolate + glycine + H2O = (6S)-5,6,7,8-tetrahydrofolate + L-serine. The protein operates within one-carbon metabolism; tetrahydrofolate interconversion. It participates in amino-acid biosynthesis; glycine biosynthesis; glycine from L-serine: step 1/1. In terms of biological role, catalyzes the reversible interconversion of serine and glycine with tetrahydrofolate (THF) serving as the one-carbon carrier. This reaction serves as the major source of one-carbon groups required for the biosynthesis of purines, thymidylate, methionine, and other important biomolecules. Also exhibits THF-independent aldolase activity toward beta-hydroxyamino acids, producing glycine and aldehydes, via a retro-aldol mechanism. This is Serine hydroxymethyltransferase 1 from Vibrio vulnificus (strain CMCP6).